Consider the following 317-residue polypeptide: Melanocyte-stimulating hormone receptor (317 aa).

Residues 1 to 37 (MPVQGSLRSLVGAVNSTPTASPHLRPATNQTEPQCLE) are Extracellular-facing. An N-linked (GlcNAc...) asparagine glycan is attached at Asn-29. Residues 38–63 (VSVPVGLFLCLGLVSLVENTLVVAVI) form a helical membrane-spanning segment. Residues 64–72 (AKNRNLHSP) lie on the Cytoplasmic side of the membrane. A helical transmembrane segment spans residues 73–93 (MYCFICCLALSDLLVSVSNVL). Topologically, residues 94–118 (KTAVLLLLEAGALAAQATVVQQLGN) are extracellular. Residues 119–140 (VINMLICSSMVSSLCFLGAIAM) form a helical membrane-spanning segment. Residues 141 to 163 (DRYISIFYALRYHSIVTLARARR) lie on the Cytoplasmic side of the membrane. Residues 164–183 (AIAAVWVASILSSILFFTYY) form a helical membrane-spanning segment. Topologically, residues 184–191 (DRTAALLC) are extracellular. The chain crosses the membrane as a helical span at residues 192–211 (LVVFFLAMLVLMAVLYVHML). Residues 212–240 (TQACQHAQGIARLHKRQHPVQQGWGLKGA) lie on the Cytoplasmic side of the membrane. Residues 241–266 (ATLAVLLGVFFLCWGPLFLHLTLIAV) form a helical membrane-spanning segment. The Extracellular segment spans residues 267-279 (CPQHPTCNCIVKN). A helical membrane pass occupies residues 280 to 300 (FKLFLALIICNAIVDPLIYAF). Over 301–317 (RSQELRKTLKEVLLFSW) the chain is Cytoplasmic.

It belongs to the G-protein coupled receptor 1 family. As to quaternary structure, interacts with MGRN1, but does not undergo MGRN1-mediated ubiquitination; this interaction competes with GNAS-binding and thus inhibits agonist-induced cAMP production. Interacts with OPN3; the interaction results in a decrease in MC1R-mediated cAMP signaling and ultimately a decrease in melanin production in melanocytes.

Its subcellular location is the cell membrane. Its function is as follows. Receptor for MSH (alpha, beta and gamma) and ACTH. The activity of this receptor is mediated by G proteins which activate adenylate cyclase. Mediates melanogenesis, the production of eumelanin (black/brown) and phaeomelanin (red/yellow), via regulation of cAMP signaling in melanocytes. This is Melanocyte-stimulating hormone receptor (MC1R) from Varecia rubra (Red ruffed lemur).